The following is a 161-amino-acid chain: Crossover junction endodeoxyribonuclease RuvC (161 aa).

Residues D8, E67, and D139 contribute to the active site. Residues D8, E67, and D139 each coordinate Mg(2+).

The protein belongs to the RuvC family. Homodimer which binds Holliday junction (HJ) DNA. The HJ becomes 2-fold symmetrical on binding to RuvC with unstacked arms; it has a different conformation from HJ DNA in complex with RuvA. In the full resolvosome a probable DNA-RuvA(4)-RuvB(12)-RuvC(2) complex forms which resolves the HJ. The cofactor is Mg(2+).

The protein localises to the cytoplasm. The enzyme catalyses Endonucleolytic cleavage at a junction such as a reciprocal single-stranded crossover between two homologous DNA duplexes (Holliday junction).. Functionally, the RuvA-RuvB-RuvC complex processes Holliday junction (HJ) DNA during genetic recombination and DNA repair. Endonuclease that resolves HJ intermediates. Cleaves cruciform DNA by making single-stranded nicks across the HJ at symmetrical positions within the homologous arms, yielding a 5'-phosphate and a 3'-hydroxyl group; requires a central core of homology in the junction. The consensus cleavage sequence is 5'-(A/T)TT(C/G)-3'. Cleavage occurs on the 3'-side of the TT dinucleotide at the point of strand exchange. HJ branch migration catalyzed by RuvA-RuvB allows RuvC to scan DNA until it finds its consensus sequence, where it cleaves and resolves the cruciform DNA. In Wigglesworthia glossinidia brevipalpis, this protein is Crossover junction endodeoxyribonuclease RuvC.